The following is a 178-amino-acid chain: Deoxycytidylate deaminase (178 aa).

The CMP/dCMP-type deaminase domain occupies 14–145 (EWPEYFMAVA…DEATAARLLF (132 aa)). Position 84 (H84) interacts with Zn(2+). The active-site Proton donor is E86. C110 and C113 together coordinate Zn(2+). At S174 the chain carries Phosphoserine.

The protein belongs to the cytidine and deoxycytidylate deaminase family. In terms of assembly, homohexamer. It depends on Zn(2+) as a cofactor.

The catalysed reaction is dCMP + H2O + H(+) = dUMP + NH4(+). The enzyme catalyses 5-hydroxymethyl-dCMP + H2O + H(+) = 5-hydroxymethyl-dUMP + NH4(+). Its activity is regulated as follows. Allosteric enzyme whose activity is greatly influenced by the end products of its metabolic pathway, dCTP and dTTP. Functionally, catalyzes the deamination of dCMP to dUMP, providing the nucleoside monophosphate substrate for the thymidylate synthase/TYMS. Also, part of a nucleotide salvage pathway that eliminates epigenetically modified 5-hydroxymethyl-dCMP (hmdCMP) in a two-step process entailing deamination to cytotoxic 5-hydroxymethyl-dUMP (hmdUMP), followed by its hydrolysis into 5-hydroxymethyluracil (hmU) and 2-deoxy-D-ribose 5-phosphate (deoxyribosephosphate). Catalyzes the first step in that pathway, the deamination of 5-hydroxymethyl-dCMP (hmdCMP). The polypeptide is Deoxycytidylate deaminase (Homo sapiens (Human)).